We begin with the raw amino-acid sequence, 82 residues long: Sulfur carrier protein TusA (82 aa).

Cysteine 19 serves as the catalytic Cysteine persulfide intermediate.

The protein belongs to the sulfur carrier protein TusA family.

The protein resides in the cytoplasm. Its function is as follows. Sulfur carrier protein which probably makes part of a sulfur-relay system. This Vibrio parahaemolyticus serotype O3:K6 (strain RIMD 2210633) protein is Sulfur carrier protein TusA.